The primary structure comprises 195 residues: Protein LIGHT-DEPENDENT SHORT HYPOCOTYLS 7 (195 aa).

Disordered regions lie at residues 1–41 and 154–195; these read MASH…LSRY and SQAK…NLAS. Over residues 21–36 the composition is skewed to pro residues; that stretch reads QPQPQPHQPQSPPNPP. In terms of domain architecture, ALOG spans 40 to 167; it reads RYESQKRRDW…ARGVPYKKRK (128 aa). A compositionally biased stretch (basic residues) spans 162–175; that stretch reads PYKKRKKRKKRNPM. A Nuclear localization signal motif is present at residues 165 to 169; the sequence is KRKKR. Residues 184 to 195 show a composition bias toward low complexity; that stretch reads TTGTSSSSNLAS.

This sequence belongs to the plant homeotic and developmental regulators ALOG protein family.

It is found in the nucleus. Probable transcription regulator that acts as a developmental regulator by promoting cell growth in response to light. This Arabidopsis thaliana (Mouse-ear cress) protein is Protein LIGHT-DEPENDENT SHORT HYPOCOTYLS 7 (LSH7).